Consider the following 124-residue polypeptide: MLQNSELLQEYLPIAIFFGIATLVSSLIMILPNLLATKKYNKDKLEPYECGFEPFDDARSKFDIRFYLVAILFIIFDLEITFLVPWAISLGTIGKIGFFSMMFFLFVLTIGFVYEWKKGALDWE.

A run of 3 helical transmembrane segments spans residues 11–31, 68–88, and 93–113; these read YLPIAIFFGIATLVSSLIMIL, LVAILFIIFDLEITFLVPWAI, and IGKIGFFSMMFFLFVLTIGFV.

The protein belongs to the complex I subunit 3 family. As to quaternary structure, NDH-1 is composed of 14 different subunits. Subunits NuoA, H, J, K, L, M, N constitute the membrane sector of the complex.

It is found in the cell inner membrane. It carries out the reaction a quinone + NADH + 5 H(+)(in) = a quinol + NAD(+) + 4 H(+)(out). Functionally, NDH-1 shuttles electrons from NADH, via FMN and iron-sulfur (Fe-S) centers, to quinones in the respiratory chain. The immediate electron acceptor for the enzyme in this species is believed to be ubiquinone. Couples the redox reaction to proton translocation (for every two electrons transferred, four hydrogen ions are translocated across the cytoplasmic membrane), and thus conserves the redox energy in a proton gradient. In Rickettsia bellii (strain RML369-C), this protein is NADH-quinone oxidoreductase subunit A.